The following is a 115-amino-acid chain: Large ribosomal subunit protein bL19 (115 aa).

It belongs to the bacterial ribosomal protein bL19 family.

In terms of biological role, this protein is located at the 30S-50S ribosomal subunit interface and may play a role in the structure and function of the aminoacyl-tRNA binding site. The chain is Large ribosomal subunit protein bL19 from Lactobacillus acidophilus (strain ATCC 700396 / NCK56 / N2 / NCFM).